A 512-amino-acid polypeptide reads, in one-letter code: Cytochrome P450 monooxygenase 208 (512 aa).

Residues leucine 4–tyrosine 24 form a helical membrane-spanning segment. Cysteine 438 is a heme binding site.

This sequence belongs to the cytochrome P450 family. Heme is required as a cofactor.

It is found in the membrane. The protein operates within secondary metabolite biosynthesis. Cytochrome P450 monooxygenase that is able to use 7-ethoxycoumarin as a substrate for oxidation. The protein is Cytochrome P450 monooxygenase 208 of Postia placenta (strain ATCC 44394 / Madison 698-R) (Brown rot fungus).